We begin with the raw amino-acid sequence, 551 residues long: Probable NADH-ubiquinone oxidoreductase C947.15c, mitochondrial (551 aa).

The N-terminal 35 residues, 1–35, are a transit peptide targeting the mitochondrion; the sequence is MSVSKARLQSVVRLSRTVPYSKTMVRSFHVSCAVK. 92–122 serves as a coordination point for FAD; the sequence is NIVVLGSGWGAVAAIKNLDPSLYNITLVSPR. 255-291 contributes to the NAD(+) binding site; the sequence is LHITVVGGGPTGMEFAAEMQDFIDNDVKDMFPELQKD.

The protein belongs to the NADH dehydrogenase family.

The protein resides in the mitochondrion. It catalyses the reaction a quinone + NADH + H(+) = a quinol + NAD(+). It carries out the reaction a ubiquinone + NADH + H(+) = a ubiquinol + NAD(+). Functionally, catalyzes the oxidation of NADH. The polypeptide is Probable NADH-ubiquinone oxidoreductase C947.15c, mitochondrial (Schizosaccharomyces pombe (strain 972 / ATCC 24843) (Fission yeast)).